Here is a 368-residue protein sequence, read N- to C-terminus: Ferrochelatase (368 aa).

Fe cation contacts are provided by His209 and Glu290. A disordered region spans residues 341–368; the sequence is ADLGGGREATGQAAERSRQRALALGAKQ.

Belongs to the ferrochelatase family.

It localises to the cytoplasm. It catalyses the reaction heme b + 2 H(+) = protoporphyrin IX + Fe(2+). The protein operates within porphyrin-containing compound metabolism; protoheme biosynthesis; protoheme from protoporphyrin-IX: step 1/1. Functionally, catalyzes the ferrous insertion into protoporphyrin IX. The protein is Ferrochelatase of Nitrosococcus oceani (strain ATCC 19707 / BCRC 17464 / JCM 30415 / NCIMB 11848 / C-107).